The sequence spans 330 residues: Embigin (330 aa).

The first 33 residues, 1–33 (MRSHTGLRALVAPGYPLLLLCLLAATRPDPAEG), serve as a signal peptide directing secretion. Residues 34 to 254 (DPTDPTFTSL…QLGESEEQNE (221 aa)) are Extracellular-facing. 2 Ig-like V-type domains span residues 38-161 (PTFT…IHVP) and 162-256 (KAHG…NELV). N-linked (GlcNAc...) asparagine glycosylation is found at Asn-55, Asn-62, Asn-70, Asn-101, Asn-118, Asn-191, Asn-198, Asn-216, and Asn-221. Cystine bridges form between Cys-89–Cys-145 and Cys-182–Cys-240. Residues 255-283 (LVVLSFLVPLKPFLAILAEVILLVAIILL) form a helical membrane-spanning segment. At 284–330 (CEVYTHKKKNDPDAGKEFEQIEQLKSDDSNGIENNVPRYRKTDSADQ) the chain is on the cytoplasmic side. The segment covering 293-311 (NDPDAGKEFEQIEQLKSDD) has biased composition (basic and acidic residues). The tract at residues 293-330 (NDPDAGKEFEQIEQLKSDDSNGIENNVPRYRKTDSADQ) is disordered. Phosphoserine is present on Ser-312.

Interacts with SLC16A1, SLC16A6 and SLC16A7. Only member of the immunoglobulin superfamily to be expressed in embryonal carcinoma cells, which resemble multipotential cells of early embryos.

The protein localises to the cell membrane. Its subcellular location is the synapse. Functionally, plays a role in targeting the monocarboxylate transporters SLC16A1, SLC16A6 and SLC16A7 to the cell membrane. Plays a role in the outgrowth of motoneurons and in the formation of neuromuscular junctions. Following muscle denervation, promotes nerve terminal sprouting and the formation of additional acetylcholine receptor clusters at synaptic sites without affecting terminal Schwann cell number or morphology. Delays the retraction of terminal sprouts following re-innervation of denervated endplates. This Mus musculus (Mouse) protein is Embigin (Emb).